A 353-amino-acid chain; its full sequence is Histidinol-phosphate aminotransferase (353 aa).

Residue lysine 211 is modified to N6-(pyridoxal phosphate)lysine.

Belongs to the class-II pyridoxal-phosphate-dependent aminotransferase family. Histidinol-phosphate aminotransferase subfamily. Homodimer. Pyridoxal 5'-phosphate serves as cofactor.

It catalyses the reaction L-histidinol phosphate + 2-oxoglutarate = 3-(imidazol-4-yl)-2-oxopropyl phosphate + L-glutamate. Its pathway is amino-acid biosynthesis; L-histidine biosynthesis; L-histidine from 5-phospho-alpha-D-ribose 1-diphosphate: step 7/9. The protein is Histidinol-phosphate aminotransferase of Marinomonas sp. (strain MWYL1).